A 333-amino-acid polypeptide reads, in one-letter code: Holliday junction branch migration complex subunit RuvB (333 aa).

A large ATPase domain (RuvB-L) region spans residues 1–182; the sequence is MDERLLSGES…FGVLSRLEYY (182 aa). Residues Leu21, Arg22, Gly63, Lys66, Thr67, Thr68, 129-131, Arg172, Tyr182, and Arg219 contribute to the ATP site; that span reads EDF. A Mg(2+)-binding site is contributed by Thr67. The small ATPAse domain (RuvB-S) stretch occupies residues 183 to 253; the sequence is TVDQLSEIVE…ITQMALELLQ (71 aa). The tract at residues 256 to 333 is head domain (RuvB-H); the sequence is KLGLDHIDHK…EHFGMEMPKV (78 aa). Positions 311 and 316 each coordinate DNA.

Belongs to the RuvB family. Homohexamer. Forms an RuvA(8)-RuvB(12)-Holliday junction (HJ) complex. HJ DNA is sandwiched between 2 RuvA tetramers; dsDNA enters through RuvA and exits via RuvB. An RuvB hexamer assembles on each DNA strand where it exits the tetramer. Each RuvB hexamer is contacted by two RuvA subunits (via domain III) on 2 adjacent RuvB subunits; this complex drives branch migration. In the full resolvosome a probable DNA-RuvA(4)-RuvB(12)-RuvC(2) complex forms which resolves the HJ.

The protein localises to the cytoplasm. It carries out the reaction ATP + H2O = ADP + phosphate + H(+). Functionally, the RuvA-RuvB-RuvC complex processes Holliday junction (HJ) DNA during genetic recombination and DNA repair, while the RuvA-RuvB complex plays an important role in the rescue of blocked DNA replication forks via replication fork reversal (RFR). RuvA specifically binds to HJ cruciform DNA, conferring on it an open structure. The RuvB hexamer acts as an ATP-dependent pump, pulling dsDNA into and through the RuvAB complex. RuvB forms 2 homohexamers on either side of HJ DNA bound by 1 or 2 RuvA tetramers; 4 subunits per hexamer contact DNA at a time. Coordinated motions by a converter formed by DNA-disengaged RuvB subunits stimulates ATP hydrolysis and nucleotide exchange. Immobilization of the converter enables RuvB to convert the ATP-contained energy into a lever motion, pulling 2 nucleotides of DNA out of the RuvA tetramer per ATP hydrolyzed, thus driving DNA branch migration. The RuvB motors rotate together with the DNA substrate, which together with the progressing nucleotide cycle form the mechanistic basis for DNA recombination by continuous HJ branch migration. Branch migration allows RuvC to scan DNA until it finds its consensus sequence, where it cleaves and resolves cruciform DNA. The sequence is that of Holliday junction branch migration complex subunit RuvB from Bacillus cereus (strain ATCC 10987 / NRS 248).